The sequence spans 233 residues: 7-cyano-7-deazaguanine synthase (233 aa).

11–21 is an ATP binding site; sequence FSGGQDSTTCL. 4 residues coordinate Zn(2+): Cys199, Cys214, Cys217, and Cys220.

Belongs to the QueC family. Zn(2+) is required as a cofactor.

It carries out the reaction 7-carboxy-7-deazaguanine + NH4(+) + ATP = 7-cyano-7-deazaguanine + ADP + phosphate + H2O + H(+). It functions in the pathway purine metabolism; 7-cyano-7-deazaguanine biosynthesis. In terms of biological role, catalyzes the ATP-dependent conversion of 7-carboxy-7-deazaguanine (CDG) to 7-cyano-7-deazaguanine (preQ(0)). This chain is 7-cyano-7-deazaguanine synthase, found in Herminiimonas arsenicoxydans.